Reading from the N-terminus, the 207-residue chain is Minor capsid protein P11 (207 aa).

The interval 7-23 is hydrophobic; the sequence is VKVVAILAVLFLVYKLW. Residues 63–82 are disordered; the sequence is ETDAEDDDIYTGETDDMYDG.

In terms of assembly, interacts with the major capsid protein.

It is found in the virion. One of the minor capsid proteins that constitute a network internal to the major capsid proteins and outside the lipid membrane. The minor capsid proteins glue and stabilize the capsomers. the p11 zip protein binds together the neighboring symmetrons. This chain is Minor capsid protein P11, found in Paramecium bursaria Chlorella virus 1 (PBCV-1).